We begin with the raw amino-acid sequence, 175 residues long: Apoptosis regulatory protein Siva (175 aa).

Phosphotyrosine; by ABL2 is present on Tyr34. Positions 36–55 (QEVFEKTKRLLFLGAQAYLD) are interaction with BCL2L1 isoform Bcl-x(L) and inhibition of BCL2L1 anti-apoptotic activity. A Phosphoserine modification is found at Ser70. The interaction with coxsackievirus B3 VP2 stretch occupies residues 105–123 (DPSGVASIACSSCVRAVDG).

In terms of assembly, binds through its N-terminal region to the C-terminus of CD27 and to PXMP2/PMP22. Binds to the C-terminus of TNFRSF18/GITR. Isoform 1 binds to BCL2L1/BCLX isoform Bcl-x(L) but not to BAX. (Microbial infection) Interacts with coxsackievirus B3 capsid protein VP2; this interaction inhibits the binding of SIVA1 to CD27. Requires Zn(2+) as cofactor. Post-translationally, phosphorylated by ABL2/ARG in response to oxidative stress. As to expression, ubiquitous. Mostly expressed in thymus, testis, ovary, prostate, small intestine and spleen and less in colon.

The protein localises to the cytoplasm. It is found in the nucleus. Its function is as follows. Induces CD27-mediated apoptosis. Inhibits BCL2L1 isoform Bcl-x(L) anti-apoptotic activity. Inhibits activation of NF-kappa-B and promotes T-cell receptor-mediated apoptosis. This Homo sapiens (Human) protein is Apoptosis regulatory protein Siva (SIVA1).